A 401-amino-acid polypeptide reads, in one-letter code: Probable aspartate/prephenate aminotransferase (401 aa).

The L-aspartate site is built by Gly-39, Trp-125, and Asn-175. Lys-239 carries the N6-(pyridoxal phosphate)lysine modification. An L-aspartate-binding site is contributed by Arg-375.

It belongs to the class-I pyridoxal-phosphate-dependent aminotransferase family. Homodimer. Requires pyridoxal 5'-phosphate as cofactor.

It localises to the cytoplasm. The catalysed reaction is L-aspartate + 2-oxoglutarate = oxaloacetate + L-glutamate. The enzyme catalyses L-arogenate + 2-oxoglutarate = prephenate + L-glutamate. Its function is as follows. Catalyzes the reversible conversion of aspartate and 2-oxoglutarate to glutamate and oxaloacetate. Can also transaminate prephenate in the presence of glutamate. This Rickettsia conorii (strain ATCC VR-613 / Malish 7) protein is Probable aspartate/prephenate aminotransferase (aatA).